The following is a 287-amino-acid chain: ATP synthase gamma chain (287 aa).

Belongs to the ATPase gamma chain family. As to quaternary structure, F-type ATPases have 2 components, CF(1) - the catalytic core - and CF(0) - the membrane proton channel. CF(1) has five subunits: alpha(3), beta(3), gamma(1), delta(1), epsilon(1). CF(0) has three main subunits: a, b and c.

It is found in the cell inner membrane. Functionally, produces ATP from ADP in the presence of a proton gradient across the membrane. The gamma chain is believed to be important in regulating ATPase activity and the flow of protons through the CF(0) complex. This Ectopseudomonas mendocina (strain ymp) (Pseudomonas mendocina) protein is ATP synthase gamma chain.